A 625-amino-acid polypeptide reads, in one-letter code: DELLA protein SLR1 (625 aa).

Positions 1–34 (MKREYQEAGGSSGGGSSADMGSCKDKVMAGAAGE) are disordered. The DELLA motif motif lies at 39-43 (DELLA). The disordered stretch occupies residues 167–208 (TADPSAADSARDTKRMRTGGGSTSSSSSSSSSLGGGASRGSV). Residues 189 to 198 (TSSSSSSSSS) are compositionally biased toward low complexity. Residues 232 to 621 (VDTQEAGIRL…RPLIATSAWR (390 aa)) enclose the GRAS domain. A leucine repeat I (LRI) region spans residues 239 to 294 (IRLVHALLACAEAVQQENFAAAEALVKQIPTLAASQGGAMRKVAAYFGEALARRVY). Positions 241-278 (LVHALLACAEAVQQENFAAAEALVKQIPTLAASQGGAM) are required for possible homodimerization. The short motif at 246-250 (LACAE) is the LxCxE motif element. Residues 313 to 378 (HAHFYESCPY…GGPPSFRLTG (66 aa)) form a VHIID region. Residues 344–348 (VHVVD) carry the VHIID motif. The tract at residues 392–431 (QVGWKLAQFAHTIRVDFQYRGLVAATLADLEPFMLQPEGE) is leucine repeat II (LRII). A PFYRE region spans residues 441–542 (IAVNSVFELH…EVYLGRQICN (102 aa)). An LXXLL motif motif is present at residues 449–453 (LHRLL). Positions 545–621 (ACEGAERTER…RPLIATSAWR (77 aa)) are SAW.

This sequence belongs to the GRAS family. DELLA subfamily.

Its function is as follows. Probable transcriptional regulator that acts as a repressor of the gibberellin (GA) signaling pathway. Probably acts by participating in large multiprotein complexes that repress transcription of GA-inducible genes. Upon GA application, it is degraded by the proteasome, allowing the GA signaling pathway. In contrast, its overexpression prevents the GA signaling pathway and induces a dwarf phenotype. This is DELLA protein SLR1 from Oryza sativa subsp. indica (Rice).